The following is a 99-amino-acid chain: Protein S100-Z (99 aa).

EF-hand domains lie at Ile13–Ser48 and Lys50–Ala85. Positions 20, 23, 25, 28, 33, 63, 65, 67, 69, and 74 each coordinate Ca(2+).

It belongs to the S-100 family. As to quaternary structure, homodimer. Homodimers may assemble into larger stable oligomers. In larva at 5 days post-fertilization, shows very restricted expression only in a few large cells of the olfactory placode. More widely expressed in the adult. Expressed at higher levels in gut than in spleen, head kidney and gill.

The chain is Protein S100-Z from Danio rerio (Zebrafish).